Consider the following 1477-residue polypeptide: MWSLPASEGESATAHFFLGAGDEGLGTRGLGMRPEESDSELLEDEEDEVPPEPQIIVGICAMTKKSKSKPMTQILERLCRFDYLTVIILGEDVILNEPVENWPSCHCLISFHSKGFPLDKAVAYSKLRNPFLINDLAMQYYIQDRREVYRILQEEGIDLPRYAVLNRDPARPEECNLIEGEDQVEVNGAVFPKPFVEKPVSAEDHNVYIYYPSSAGGGSQRLFRKIGSRSSVYSPESSVRKTGSYIYEEFMPTDGTDVKVYTVGPDYAHAEARKSPALDGKVERDSEGKEIRYPVMLTAMEKLVARKVCVAFKQTVCGFDLLRANGHSFVCDVNGFSFVKNSMKYYDDCAKILGNTIMRELAPQFQIPWSIPMEAEDIPIVPTTSGTMMELRCVIAIIRHGDRTPKQKMKMEVTHPRFFSLFEKHGGYKTGKLKLKRPEQLQEVLDITRLLLAELEKEPGGEIEEKTGKLEQLKSVLEMYGHFSGINRKVQLTYYPHGVKASNEGQDTQREALAPSLLLVLKWGGELTPAGRVQAEELGRAFRCMYPGGQGDYAGFPGCGLLRLHSTFRHDLKIYASDEGRVQMTAAAFAKGLLALEGELTPILVQMVKSANMNGLLDSDGDSLSSCQHRVKARLHHILQQDAPFGPEDYNQLAPTGSTSLLSSMAVIQNPVKVCDQVFDLIENLTHQIRERMQDPKSVDLQLYHSETLELMLQRWSKLERDFRQKSGRYDISKIPDIYDCVKYDVQHNGSLGLQGTAELLRLSKALADVVIPQEYGISREEKLEIAVGFCLPLLRKILLDLQRTHEDESVNKLHPLYSRGVLSPGRHVRTRLYFTSESHVHSLLSVFRYGGLLDETKDTQWQRALAYLSAISELNYMTQIVIMLYEDNTRDPLSEERFHVELHFSPGVKGVEEEGSAPTGCGFRPASSENEERKADQGSVEDLCPGKASDEPDRALQTSPLPSEGPGLPKRSPLIRNRKAGSMEVLSETSSSRPGGHRLFSSSRPPTEMKQSGLGSQCTGLFSTTVLGGSSSAPNLQDYARSQGKKLPPASLKHRDELLFVPAVKRFSVSFAKHPTNGFEGCSMVPTIYPLETLHNALSLRQVSEFLSRVCQRHTEAQAQASAALFDSMHSNQASDSPFSPPRTLHSPTLQLQQRSEKPPWYSSGPSSTVSSAGPSSPTAVDGNCPFGFSDQPSVSSHVTEEYQGLGLLQEAPGSGAQEPPLEGQQEPFEQNQSPQEPPVETKKPCQEVAEEVSQPCQDIPEEVNQPCQQVSDICQPCEENHDDVDQTCQEVPQISQPCEDASQLYQKVSKEVCELCQNSEEVNQPCQGVPVEIGRLVHGFPVGVGGLAQEVLGEVGRPTQEIPEELSQSCQEFSVDIGRLAQEASAINLLSPDTPEVDNPPLEFPGEGALQAQEVSEWVKQQQSYVVPELIDQLSREEVPQVQCPPSNANPQSQSLAPDQNAPLPPATCDSSFSH.

Residues Thr-27–Asp-47 form a disordered region. The segment covering Ser-37–Asp-47 has biased composition (acidic residues). A substrate-binding site is contributed by Lys-64–Lys-65. ATP-binding positions include Arg-145, Lys-198, His-205, Arg-224, Glu-248–Met-251, and Asp-257–Lys-259. Arg-224–Lys-225 lines the substrate pocket. Lys-259 and Arg-273 together coordinate substrate. Residues Ser-275, Asp-320, and Asp-332–Asn-334 each bind ATP. Ser-337 to Lys-340 contacts substrate. The segment at Pro-382–Ala-453 is polyphosphoinositide-binding domain. Residues Lys-910–Gly-1016 form a disordered region. Residues Ser-940 and Ser-983 each carry the phosphoserine modification. Residues Phe-1001–Gly-1016 are compositionally biased toward polar residues. A phosphoserine mark is found at Ser-1033, Ser-1069, Ser-1141, and Ser-1148. Disordered regions lie at residues His-1131–Gln-1248 and Arg-1438–His-1477. Positions Ser-1164–Val-1182 are enriched in low complexity. Positions Cys-1446–Pro-1460 are enriched in polar residues.

Belongs to the histidine acid phosphatase family. VIP1 subfamily.

It is found in the cytoplasm. Its subcellular location is the cytosol. The protein localises to the cell membrane. The catalysed reaction is 1D-myo-inositol hexakisphosphate + ATP = 1-diphospho-1D-myo-inositol 2,3,4,5,6-pentakisphosphate + ADP. It carries out the reaction 5-diphospho-1D-myo-inositol 1,2,3,4,6-pentakisphosphate + ATP + H(+) = 1,5-bis(diphospho)-1D-myo-inositol 2,3,4,6-tetrakisphosphate + ADP. Bifunctional inositol kinase that acts in concert with the IP6K kinases IP6K1, IP6K2 and IP6K3 to synthesize the diphosphate group-containing inositol pyrophosphates diphosphoinositol pentakisphosphate, PP-InsP5, and bis-diphosphoinositol tetrakisphosphate, (PP)2-InsP4. PP-InsP5 and (PP)2-InsP4, also respectively called InsP7 and InsP8, regulate a variety of cellular processes, including apoptosis, vesicle trafficking, cytoskeletal dynamics, exocytosis, insulin signaling and neutrophil activation. Phosphorylates inositol hexakisphosphate (InsP6) at position 1 to produce PP-InsP5 which is in turn phosphorylated by IP6Ks to produce (PP)2-InsP4. Alternatively, phosphorylates PP-InsP5 at position 1, produced by IP6Ks from InsP6, to produce (PP)2-InsP4. Activated when cells are exposed to hyperosmotic stress. The protein is Inositol hexakisphosphate and diphosphoinositol-pentakisphosphate kinase 1 of Bos taurus (Bovine).